The following is a 1173-amino-acid chain: Rac guanine nucleotide exchange factor JJ (1173 aa).

Disordered stretches follow at residues methionine 1–glutamine 380, lysine 458–methionine 479, and aspartate 712–glutamine 765. Composition is skewed to low complexity over residues glutamine 8–glutamine 23 and glutamine 35–proline 45. A compositionally biased stretch (polar residues) spans threonine 50 to glycine 62. Composition is skewed to low complexity over residues threonine 72–glutamine 82 and glutamine 98–tyrosine 118. A compositionally biased stretch (polar residues) spans serine 119 to tyrosine 133. Low complexity-rich tracts occupy residues threonine 134–threonine 143, serine 153–asparagine 191, and serine 208–serine 219. The span at tyrosine 220 to glutamine 239 shows a compositional bias: polar residues. Positions proline 240 to threonine 258 are enriched in low complexity. Positions serine 262 to isoleucine 277 are enriched in basic and acidic residues. A compositionally biased stretch (polar residues) spans threonine 280–asparagine 295. Low complexity predominate over residues glutamine 296–glutamine 380. The segment covering lysine 470–methionine 479 has biased composition (basic and acidic residues). The span at glutamine 743–glutamine 765 shows a compositional bias: low complexity. The 30-residue stretch at arginine 793–leucine 822 folds into the IQ domain. Positions asparagine 833–arginine 1016 constitute a DH domain. One can recognise a PH domain in the interval arginine 1044–lysine 1146.

Its function is as follows. GTPase-activating protein. This chain is Rac guanine nucleotide exchange factor JJ (gxcJJ), found in Dictyostelium discoideum (Social amoeba).